A 513-amino-acid polypeptide reads, in one-letter code: Protein phosphatase 1H (513 aa).

Ser7 is modified (phosphoserine). In terms of domain architecture, PPM-type phosphatase spans 77-506 (ATGYAEVINA…DDISVYVIPL (430 aa)). Positions 110-133 (ITSTPNRNSKRRSSLPNGEGLQLK) are disordered. Position 113 is a phosphothreonine (Thr113). Phosphoserine is present on residues Ser123 and Ser210. Arg212 carries the omega-N-methylarginine modification. Ser220 carries the phosphoserine modification. Thr223 carries the phosphothreonine modification. Ser421 is modified (phosphoserine).

This sequence belongs to the PP2C family.

It localises to the nucleus. The protein localises to the cytoplasm. It catalyses the reaction O-phospho-L-seryl-[protein] + H2O = L-seryl-[protein] + phosphate. It carries out the reaction O-phospho-L-threonyl-[protein] + H2O = L-threonyl-[protein] + phosphate. Its function is as follows. Dephosphorylates CDKN1B at 'Thr-187', thus removing a signal for proteasomal degradation. The sequence is that of Protein phosphatase 1H (Ppm1h) from Rattus norvegicus (Rat).